The sequence spans 56 residues: Protein translocase subunit SecE (56 aa).

A helical transmembrane segment spans residues 30–50; that stretch reads VFWLVLFVSIFLGIVDYLMFL.

This sequence belongs to the SecE/SEC61-gamma family. In terms of assembly, component of the Sec protein translocase complex. Heterotrimer consisting of SecY, SecE and SecG subunits. The heterotrimers can form oligomers, although 1 heterotrimer is thought to be able to translocate proteins. Interacts with the ribosome. Interacts with SecDF, and other proteins may be involved. Interacts with SecA.

The protein localises to the cell inner membrane. Essential subunit of the Sec protein translocation channel SecYEG. Clamps together the 2 halves of SecY. May contact the channel plug during translocation. The sequence is that of Protein translocase subunit SecE from Borreliella burgdorferi (strain ATCC 35210 / DSM 4680 / CIP 102532 / B31) (Borrelia burgdorferi).